A 359-amino-acid chain; its full sequence is MISPGSPPSIVALGGGHGLYVTLSAARRLTPYVTAIVTVADDGGSSGRLRSELGVVPPGDLRMALAALASDSPYGRLWATILQHRFGGSGALAGHPIGNLMLAGLSEVLADPVAALDEVGRILGVKGRVLPMCPIALQIEADVSGLEADPRIFRLIRGQVAIASTPGKVRRVRLLPVDPPATRQAVDAIMAANLVVLGPGSWFTSVIPHVLVPGLVTALRATTARRALVLNLAAGPGETAGFSVERHLHVLAQHAPGFTVHDIIIDADRVPNNREREQLRRAATLLQAEVHFVDVARPGTSLHDPGKLATALDGVRVGNQDSSAPTVAATEQIRLDGKRPQTGVNGPVGKGPRGDDAWR.

A disordered region spans residues 317-359 (VGNQDSSAPTVAATEQIRLDGKRPQTGVNGPVGKGPRGDDAWR).

This sequence belongs to the gluconeogenesis factor family.

It is found in the cytoplasm. Its function is as follows. Required for morphogenesis under gluconeogenic growth conditions. The protein is Putative gluconeogenesis factor of Mycobacterium leprae (strain TN).